The chain runs to 453 residues: Bifunctional protein GlmU (453 aa).

The pyrophosphorylase stretch occupies residues M1–R226. UDP-N-acetyl-alpha-D-glucosamine contacts are provided by residues L8–G11, K22, Q73, G78–T79, Y100–D102, G137, E151, N166, and N224. Position 102 (D102) interacts with Mg(2+). N224 is a binding site for Mg(2+). The interval I227 to Q247 is linker. The segment at G248–K453 is N-acetyltransferase. UDP-N-acetyl-alpha-D-glucosamine is bound by residues R330 and K348. The active-site Proton acceptor is the H360. UDP-N-acetyl-alpha-D-glucosamine is bound by residues Y363 and N374. Acetyl-CoA contacts are provided by residues A377, N383–Y384, S402, A420, and R437.

It in the N-terminal section; belongs to the N-acetylglucosamine-1-phosphate uridyltransferase family. In the C-terminal section; belongs to the transferase hexapeptide repeat family. Homotrimer. Requires Mg(2+) as cofactor.

It is found in the cytoplasm. The enzyme catalyses alpha-D-glucosamine 1-phosphate + acetyl-CoA = N-acetyl-alpha-D-glucosamine 1-phosphate + CoA + H(+). It carries out the reaction N-acetyl-alpha-D-glucosamine 1-phosphate + UTP + H(+) = UDP-N-acetyl-alpha-D-glucosamine + diphosphate. It functions in the pathway nucleotide-sugar biosynthesis; UDP-N-acetyl-alpha-D-glucosamine biosynthesis; N-acetyl-alpha-D-glucosamine 1-phosphate from alpha-D-glucosamine 6-phosphate (route II): step 2/2. Its pathway is nucleotide-sugar biosynthesis; UDP-N-acetyl-alpha-D-glucosamine biosynthesis; UDP-N-acetyl-alpha-D-glucosamine from N-acetyl-alpha-D-glucosamine 1-phosphate: step 1/1. The protein operates within bacterial outer membrane biogenesis; LPS lipid A biosynthesis. Catalyzes the last two sequential reactions in the de novo biosynthetic pathway for UDP-N-acetylglucosamine (UDP-GlcNAc). The C-terminal domain catalyzes the transfer of acetyl group from acetyl coenzyme A to glucosamine-1-phosphate (GlcN-1-P) to produce N-acetylglucosamine-1-phosphate (GlcNAc-1-P), which is converted into UDP-GlcNAc by the transfer of uridine 5-monophosphate (from uridine 5-triphosphate), a reaction catalyzed by the N-terminal domain. This chain is Bifunctional protein GlmU, found in Photobacterium profundum (strain SS9).